Consider the following 437-residue polypeptide: GTPase Der (437 aa).

EngA-type G domains are found at residues 4–167 (PVVA…PDEA) and 176–352 (IRFS…DNHR). Residues 10 to 17 (GRPNVGKS), 57 to 61 (DTGGI), 119 to 122 (NKVD), 182 to 189 (GRPNVGKS), 230 to 234 (DTAGM), and 295 to 298 (NKWD) each bind GTP. In terms of domain architecture, KH-like spans 353 to 437 (KRISSSTLND…PIKLIVRARK (85 aa)).

Belongs to the TRAFAC class TrmE-Era-EngA-EngB-Septin-like GTPase superfamily. EngA (Der) GTPase family. Associates with the 50S ribosomal subunit.

GTPase that plays an essential role in the late steps of ribosome biogenesis. This is GTPase Der from Leuconostoc citreum (strain KM20).